A 173-amino-acid polypeptide reads, in one-letter code: NADH-ubiquinone oxidoreductase chain 6 (173 aa).

Transmembrane regions (helical) follow at residues 1–21 (MTYF…AVAS), 27–47 (YGVV…LSLG), 48–68 (VSFV…VVFV), 87–107 (VVGY…VGGL), and 139–159 (CGVG…FVVL).

It belongs to the complex I subunit 6 family.

It is found in the mitochondrion membrane. The enzyme catalyses a ubiquinone + NADH + 5 H(+)(in) = a ubiquinol + NAD(+) + 4 H(+)(out). Functionally, core subunit of the mitochondrial membrane respiratory chain NADH dehydrogenase (Complex I) that is believed to belong to the minimal assembly required for catalysis. Complex I functions in the transfer of electrons from NADH to the respiratory chain. The immediate electron acceptor for the enzyme is believed to be ubiquinone. In Synthliboramphus wumizusume (Japanese murrelet), this protein is NADH-ubiquinone oxidoreductase chain 6 (MT-ND6).